We begin with the raw amino-acid sequence, 658 residues long: tRNA 5-methylaminomethyl-2-thiouridine biosynthesis bifunctional protein MnmC (658 aa).

The tRNA (mnm(5)s(2)U34)-methyltransferase stretch occupies residues methionine 1–leucine 236. The segment at isoleucine 265–alanine 658 is FAD-dependent cmnm(5)s(2)U34 oxidoreductase.

It in the N-terminal section; belongs to the methyltransferase superfamily. tRNA (mnm(5)s(2)U34)-methyltransferase family. This sequence in the C-terminal section; belongs to the DAO family. FAD serves as cofactor.

The protein resides in the cytoplasm. The enzyme catalyses 5-aminomethyl-2-thiouridine(34) in tRNA + S-adenosyl-L-methionine = 5-methylaminomethyl-2-thiouridine(34) in tRNA + S-adenosyl-L-homocysteine + H(+). In terms of biological role, catalyzes the last two steps in the biosynthesis of 5-methylaminomethyl-2-thiouridine (mnm(5)s(2)U) at the wobble position (U34) in tRNA. Catalyzes the FAD-dependent demodification of cmnm(5)s(2)U34 to nm(5)s(2)U34, followed by the transfer of a methyl group from S-adenosyl-L-methionine to nm(5)s(2)U34, to form mnm(5)s(2)U34. The polypeptide is tRNA 5-methylaminomethyl-2-thiouridine biosynthesis bifunctional protein MnmC (Pseudomonas fluorescens (strain ATCC BAA-477 / NRRL B-23932 / Pf-5)).